We begin with the raw amino-acid sequence, 363 residues long: tRNA-specific 2-thiouridylase MnmA (363 aa).

ATP-binding positions include 8–15 and L34; that span reads AMSGGVDS. C103 serves as the catalytic Nucleophile. C103 and C195 are joined by a disulfide. G127 is a binding site for ATP. The segment at 145–147 is interaction with tRNA; it reads KDQ. C195 (cysteine persulfide intermediate) is an active-site residue.

It belongs to the MnmA/TRMU family.

It is found in the cytoplasm. The enzyme catalyses S-sulfanyl-L-cysteinyl-[protein] + uridine(34) in tRNA + AH2 + ATP = 2-thiouridine(34) in tRNA + L-cysteinyl-[protein] + A + AMP + diphosphate + H(+). Catalyzes the 2-thiolation of uridine at the wobble position (U34) of tRNA, leading to the formation of s(2)U34. In Thermobifida fusca (strain YX), this protein is tRNA-specific 2-thiouridylase MnmA.